Consider the following 66-residue polypeptide: COP-associated protein (66 aa).

The HMA domain maps to 1–66 (MKATFQVPSI…ALLDAGQEVV (66 aa)). Cu cation contacts are provided by C12 and C15. A disulfide bond links C12 and C15.

Functionally, part of a cation-transporting system which is associated with copper export out of the H.pylori cells. This is COP-associated protein (copP) from Helicobacter pylori (strain ATCC 700392 / 26695) (Campylobacter pylori).